Reading from the N-terminus, the 547-residue chain is Probable acetolactate synthase (547 aa).

A thiamine diphosphate-binding site is contributed by glutamate 57. FAD is bound by residues proline 159 and 299–318 (DRVEPAREHPRPVAAGLYGD). Residues 388-468 (DFGSYAGRMI…VVSVIGNNGI (81 aa)) are thiamine pyrophosphate binding. Positions 439 and 466 each coordinate Mg(2+).

It belongs to the TPP enzyme family. The cofactor is Mg(2+). It depends on thiamine diphosphate as a cofactor.

The enzyme catalyses 2 pyruvate + H(+) = (2S)-2-acetolactate + CO2. It participates in amino-acid biosynthesis; L-isoleucine biosynthesis; L-isoleucine from 2-oxobutanoate: step 1/4. The protein operates within amino-acid biosynthesis; L-valine biosynthesis; L-valine from pyruvate: step 1/4. The sequence is that of Probable acetolactate synthase (ilvG) from Mycobacterium bovis (strain ATCC BAA-935 / AF2122/97).